The sequence spans 102 residues: Large ribosomal subunit protein P1 (102 aa).

A disordered region spans residues 69-91 (APAAAAEEKKEEEKKEEKKEEDT). Residues 74–90 (AEEKKEEEKKEEKKEED) show a composition bias toward basic and acidic residues.

Belongs to the eukaryotic ribosomal protein P1/P2 family. As to quaternary structure, part of the 50S ribosomal subunit. Homodimer, it forms part of the ribosomal stalk which helps the ribosome interact with GTP-bound translation factors. Forms a heptameric uL10/P0(P1)2(P1)2(P1)2 complex, where uL10/P0 forms an elongated spine to which the P1 dimers bind in a sequential fashion.

In terms of biological role, forms part of the ribosomal stalk, playing a central role in the interaction of the ribosome with GTP-bound translation factors. The sequence is that of Large ribosomal subunit protein P1 from Methanocaldococcus jannaschii (strain ATCC 43067 / DSM 2661 / JAL-1 / JCM 10045 / NBRC 100440) (Methanococcus jannaschii).